The sequence spans 229 residues: MLICIPDVLSKDEVAEFRRIMDAAEWEDGRSTAGAQSAMVKRNEQLPPDGEAARMLGQRIITALTRNPRFLSAAVPLQIFPPLFNRYTASRGDHFGIHVDNAVRGDPLTGLRIRTDLSMTLFLAEPDTYDGGELVIEDTYGSHEVKLPAGHAVLYPSSSLHMVTPVTRGARVASFFWMQSMIRDAHVRSMIFDLDTAIQSLTERLGRDDPDAVKLTGIYHNLIRQWAEV.

The Fe2OG dioxygenase domain occupies 78-180 (QIFPPLFNRY…RVASFFWMQS (103 aa)). 3 residues coordinate Fe cation: His-98, Asp-100, and His-161. Arg-171 provides a ligand contact to 2-oxoglutarate.

The cofactor is Fe(2+). L-ascorbate is required as a cofactor.

The chain is PKHD-type hydroxylase BBta_3541 from Bradyrhizobium sp. (strain BTAi1 / ATCC BAA-1182).